We begin with the raw amino-acid sequence, 270 residues long: 3-methyl-2-oxobutanoate hydroxymethyltransferase (270 aa).

Residues Asp-41 and Asp-80 each coordinate Mg(2+). 3-methyl-2-oxobutanoate-binding positions include Asp-41–Ser-42, Asp-80, and Lys-109. Glu-111 serves as a coordination point for Mg(2+). Residue Glu-178 is the Proton acceptor of the active site.

Belongs to the PanB family. In terms of assembly, homodecamer; pentamer of dimers. Mg(2+) serves as cofactor.

It localises to the cytoplasm. The enzyme catalyses 3-methyl-2-oxobutanoate + (6R)-5,10-methylene-5,6,7,8-tetrahydrofolate + H2O = 2-dehydropantoate + (6S)-5,6,7,8-tetrahydrofolate. It participates in cofactor biosynthesis; (R)-pantothenate biosynthesis; (R)-pantoate from 3-methyl-2-oxobutanoate: step 1/2. In terms of biological role, catalyzes the reversible reaction in which hydroxymethyl group from 5,10-methylenetetrahydrofolate is transferred onto alpha-ketoisovalerate to form ketopantoate. This Thermotoga maritima (strain ATCC 43589 / DSM 3109 / JCM 10099 / NBRC 100826 / MSB8) protein is 3-methyl-2-oxobutanoate hydroxymethyltransferase.